Reading from the N-terminus, the 126-residue chain is Large ribosomal subunit protein bL12 (126 aa).

It belongs to the bacterial ribosomal protein bL12 family. As to quaternary structure, homodimer. Part of the ribosomal stalk of the 50S ribosomal subunit. Forms a multimeric L10(L12)X complex, where L10 forms an elongated spine to which 2 to 4 L12 dimers bind in a sequential fashion. Binds GTP-bound translation factors.

Functionally, forms part of the ribosomal stalk which helps the ribosome interact with GTP-bound translation factors. Is thus essential for accurate translation. The protein is Large ribosomal subunit protein bL12 of Caulobacter sp. (strain K31).